Consider the following 684-residue polypeptide: RNA helicase NPH-II (684 aa).

The region spanning 184 to 359 is the Helicase ATP-binding domain; it reads FRAWAARRPT…EFFPDAEFVH (176 aa). 197–204 is an ATP binding site; the sequence is GGTGVGKT. The DEXH box motif lies at 308 to 311; that stretch reads DEVH. The 172-residue stretch at 392 to 563 folds into the Helicase C-terminal domain; the sequence is NVSAALSAHR…DLYVQPSDLE (172 aa).

This sequence belongs to the DEAD box helicase family. DEAH subfamily. Monomer.

The protein resides in the virion. It catalyses the reaction ATP + H2O = ADP + phosphate + H(+). NTP-dependent helicase that catalyzes unidirectional unwinding of 3'tailed duplex RNAs and plays an important role during transcription of early mRNAs, presumably by preventing R-loop formation behind the elongating RNA polymerase. Might also play a role in the export of newly synthesized mRNA chains out of the core into the cytoplasm. Required for replication and propagation of viral particles. The polypeptide is RNA helicase NPH-II (NPH2) (Homo sapiens (Human)).